A 1065-amino-acid chain; its full sequence is Pumilio domain-containing protein P35G2.14 (1065 aa).

Disordered regions lie at residues 1 to 78 (MHQD…SLRS), 130 to 265 (ITSK…PWSP), and 422 to 573 (TTGF…NTNS). A compositionally biased stretch (polar residues) spans 16–44 (RNTISKPSNNNPPLDMSSLNNDFGQQLDS). A compositionally biased stretch (low complexity) spans 59–77 (NPSSNFNDSNRSNISSSLR). Polar residues-rich tracts occupy residues 134–151 (LQNN…RGRT) and 169–189 (SSVS…HFNP). 2 stretches are compositionally biased toward low complexity: residues 190 to 224 (SSSS…SEII) and 236 to 246 (SASNAANSGSN). 2 stretches are compositionally biased toward polar residues: residues 247 to 262 (TIRA…NTLP) and 434 to 455 (GLNT…TFEV). Thr-260 bears the Phosphothreonine mark. The span at 470 to 483 (PLGSLSSRPKPSSS) shows a compositional bias: low complexity. Polar residues-rich tracts occupy residues 495 to 522 (LKTS…SSSP) and 529 to 551 (IHNQ…NGLR). Ser-506, Ser-511, and Ser-515 each carry phosphoserine. Thr-554 carries the phosphothreonine modification. The span at 559–573 (NISTRSSSESNNTNS) shows a compositional bias: low complexity. The RRM domain maps to 592-666 (HALWVGNLPS…DPVCISFAKV (75 aa)). The 354-residue stretch at 712–1065 (DLSKIYQILN…ELKKLAEVCA (354 aa)) folds into the PUM-HD domain. Pumilio repeat units lie at residues 771-808 (AINW…MMLE), 809-844 (RIAP…RLIA), 846-884 (HLQP…AILN), 886-917 (FWVI…VLVA), 919-954 (AITV…ILLT), and 956-993 (RFVQ…LVVD).

The protein localises to the cytoplasm. The sequence is that of Pumilio domain-containing protein P35G2.14 from Schizosaccharomyces pombe (strain 972 / ATCC 24843) (Fission yeast).